The primary structure comprises 448 residues: Maltoporin (448 aa).

Positions 1 to 25 (MMITLRKLPLAVAVMAGIFAAQASA) are cleaved as a signal peptide.

Belongs to the porin LamB (TC 1.B.3) family. Homotrimer formed of three 18-stranded antiparallel beta-barrels, containing three independent channels.

Its subcellular location is the cell outer membrane. The enzyme catalyses beta-maltose(in) = beta-maltose(out). Functionally, involved in the transport of maltose and maltodextrins. This chain is Maltoporin, found in Cronobacter sakazakii (strain ATCC BAA-894) (Enterobacter sakazakii).